We begin with the raw amino-acid sequence, 188 residues long: dCTP deaminase (188 aa).

A dCTP-binding site is contributed by 109 to 114 (KSTYAR). The active-site Proton donor/acceptor is the Glu135. DCTP is bound by residues Gln154, Tyr168, and Gln178.

It belongs to the dCTP deaminase family. As to quaternary structure, homotrimer.

It carries out the reaction dCTP + H2O + H(+) = dUTP + NH4(+). The protein operates within pyrimidine metabolism; dUMP biosynthesis; dUMP from dCTP (dUTP route): step 1/2. In terms of biological role, catalyzes the deamination of dCTP to dUTP. The sequence is that of dCTP deaminase from Helicobacter acinonychis (strain Sheeba).